We begin with the raw amino-acid sequence, 301 residues long: UDP-3-O-acyl-N-acetylglucosamine deacetylase (301 aa).

Residues H81, H237, and D241 each contribute to the Zn(2+) site. The active-site Proton donor is H264.

It belongs to the LpxC family. Zn(2+) is required as a cofactor.

The enzyme catalyses a UDP-3-O-[(3R)-3-hydroxyacyl]-N-acetyl-alpha-D-glucosamine + H2O = a UDP-3-O-[(3R)-3-hydroxyacyl]-alpha-D-glucosamine + acetate. It functions in the pathway glycolipid biosynthesis; lipid IV(A) biosynthesis; lipid IV(A) from (3R)-3-hydroxytetradecanoyl-[acyl-carrier-protein] and UDP-N-acetyl-alpha-D-glucosamine: step 2/6. Functionally, catalyzes the hydrolysis of UDP-3-O-myristoyl-N-acetylglucosamine to form UDP-3-O-myristoylglucosamine and acetate, the committed step in lipid A biosynthesis. The polypeptide is UDP-3-O-acyl-N-acetylglucosamine deacetylase (Leptospira borgpetersenii serovar Hardjo-bovis (strain JB197)).